We begin with the raw amino-acid sequence, 1637 residues long: Endoribonuclease Dicer homolog 3b (1637 aa).

The interval Met1–Thr40 is disordered. A compositionally biased stretch (pro residues) spans Leu9–Cys19. Over residues Arg20 to Gly29 the composition is skewed to basic residues. The Helicase ATP-binding domain occupies Val46–Gln222. Position 59–66 (Leu59–Thr66) interacts with ATP. The DECH box signature appears at Asp169–His172. Positions Ser404–Ser556 constitute a Helicase C-terminal domain. The 91-residue stretch at Cys581–Thr671 folds into the Dicer dsRNA-binding fold domain. The PAZ domain maps to Glu882–Asp1006. Residues Ala1031–Gly1200 enclose the RNase III 1 domain. 3 residues coordinate Mg(2+): Asp1214, Asp1309, and Ser1312. The region spanning Ile1241–Asp1389 is the RNase III 2 domain. 2 DRBM domains span residues Leu1412–Gln1481 and Gly1545–Glu1629.

Belongs to the helicase family. Dicer subfamily. May interact with ARGONAUTE1 or PINHEAD through their common PAZ domains. Mg(2+) is required as a cofactor. It depends on Mn(2+) as a cofactor.

The protein localises to the nucleus. Its function is as follows. Probably involved in the RNA silencing pathway. May cleave double-stranded RNA to produce short 21-24 nucleotides (nt) RNAs which target the selective destruction of complementary RNAs. This is Endoribonuclease Dicer homolog 3b (DCL3B) from Oryza sativa subsp. japonica (Rice).